The following is a 625-amino-acid chain: Putative xanthine/uracil permease C887.17 (625 aa).

10 helical membrane passes run 49 to 69, 107 to 127, 154 to 174, 192 to 212, 246 to 263, 328 to 348, 369 to 389, 406 to 426, 429 to 449, and 465 to 485; these read AGLT…TILV, AAIS…PVGM, EALL…VIGL, AGIG…LGVI, MWVG…LMMY, FAIA…GTLY, VAYI…CSPV, GILG…APIF, IPVW…MKST, and ITIA…AGII. The disordered stretch occupies residues 595–625; it reads EAVGESESFSNRQQDFRTPYAGIDMDTDDRI.

This sequence belongs to the nucleobase:cation symporter-2 (NCS2) (TC 2.A.40) family. Azg-like subfamily.

It is found in the golgi apparatus membrane. This chain is Putative xanthine/uracil permease C887.17, found in Schizosaccharomyces pombe (strain 972 / ATCC 24843) (Fission yeast).